The sequence spans 176 residues: Inorganic pyrophosphatase (176 aa).

Residues K30, R44, and Y56 each coordinate substrate. Residues D66, D71, and D103 each coordinate Mg(2+). Y142 is a substrate binding site.

This sequence belongs to the PPase family. In terms of assembly, homohexamer. Requires Mg(2+) as cofactor.

The protein resides in the cytoplasm. The enzyme catalyses diphosphate + H2O = 2 phosphate + H(+). Its function is as follows. Catalyzes the hydrolysis of inorganic pyrophosphate (PPi) forming two phosphate ions. This chain is Inorganic pyrophosphatase, found in Escherichia coli O6:H1 (strain CFT073 / ATCC 700928 / UPEC).